The chain runs to 122 residues: UPF0102 protein Mpe_A3766 (122 aa).

Belongs to the UPF0102 family.

This is UPF0102 protein Mpe_A3766 from Methylibium petroleiphilum (strain ATCC BAA-1232 / LMG 22953 / PM1).